The chain runs to 713 residues: Metal transporter CNNM3 (713 aa).

The chain crosses the membrane as a helical span at residues 7-29 (AVVGWLGWVLAAFCLGSTAGEAA). Asparagine 73 is a glycosylation site (N-linked (GlcNAc...) asparagine). The region spanning 136–314 (EAAPPWALGL…DPYSDLSKGV (179 aa)) is the CNNM transmembrane domain. A run of 4 helical transmembrane segments spans residues 137–157 (AAPP…AAVA), 199–219 (CALG…AVLL), 227–247 (AVPA…VLPA), and 267–287 (LAVL…ELAA). CBS domains follow at residues 324-385 (LTPL…CTPL) and 392-458 (YNHP…ILDE). A disordered region spans residues 664-713 (LPPSPENAELQAIPGSQTRLLGDKSRETAGSTNSRPSIPVEESPGRNPGV). Serine 667 and serine 706 each carry phosphoserine.

Belongs to the ACDP family. As to expression, widely expressed with highest levels in brain, kidney, liver, lung and heart.

It localises to the cell membrane. Its function is as follows. Probable metal transporter. In Mus musculus (Mouse), this protein is Metal transporter CNNM3 (Cnnm3).